We begin with the raw amino-acid sequence, 535 residues long: Sucrose transport protein SUT5 (535 aa).

At 1-53 (MEEGRRGDREGKSAAGWTALSTTKTTLEEKRRLQANGSVGGDAGTSGFRRIVR) the chain is on the cytoplasmic side. Residues 54 to 74 (LFFACMVAGGIQYGWALQLSL) form a helical membrane-spanning segment. Over 75–87 (LSPYSQTLGISHS) the chain is Extracellular. Residues 88–108 (YVSLTWICGPIAGFVVQPIVG) traverse the membrane as a helical segment. At 109 to 122 (YYSDRCTMKMGRRR) the chain is on the cytoplasmic side. Residues 123–143 (PFILVGCLIICISVMIIGFSA) form a helical membrane-spanning segment. Residues 144-163 (DIGRHLGDTKEHCSTYTGPR) lie on the Extracellular side of the membrane. A helical membrane pass occupies residues 164-184 (WSAAMVYIVGFWFLDFANNTV). Residues 185–203 (QGPARAMMADLSAGHHGPN) lie on the Cytoplasmic side of the membrane. Residues 204-224 (VGQSIFSLWMAIGSVLGYLSG) traverse the membrane as a helical segment. Residues 225–249 (ANGKWHEWFPWLKTAACCDACANLK) are Extracellular-facing. Residues 250–270 (GAFFTAVLLIVVSMTVTMYLA) traverse the membrane as a helical segment. Topologically, residues 271-302 (DEMPLDKQDVDTSGGGGCAVFVDLFKSLRNLP) are cytoplasmic. A helical transmembrane segment spans residues 303–323 (PAMFKVLAVTAVTWLSWFPFI). The Extracellular portion of the chain corresponds to 324–354 (QYNTDWMGREIYHGEPQGTAAKADVYDAGVR). A helical membrane pass occupies residues 355 to 375 (EGAMGLLFCSVALGVTSFVIP). The Cytoplasmic portion of the chain corresponds to 376–384 (KLCRRLTSK). A helical transmembrane segment spans residues 385–405 (VVWSISNFLVFALMAVMVAVG). At 406–429 (MVSMRGYRPSLAAGLTGPDPTLKA) the chain is on the extracellular side. A helical transmembrane segment spans residues 430–450 (VALVVFALIGIPQAVLFSVPW). Topologically, residues 451-465 (AVASEVTAEEGGGQG) are cytoplasmic. A helical membrane pass occupies residues 466–486 (LAIGVLNIAIVVPQLVIALTA). The Extracellular segment spans residues 487-498 (GPIDGAFNKGNT). A helical transmembrane segment spans residues 499–519 (PAFGIGGAFAFICGVLALIWL). Residues 520 to 535 (PKTRGVSNAAVVAGGH) lie on the Cytoplasmic side of the membrane.

Belongs to the glycoside-pentoside-hexuronide (GPH) cation symporter transporter (TC 2.A.2.4) family. As to quaternary structure, homodimer. As to expression, widely expressed. Highest expression in sink leaves and lowest in germinating seeds.

The protein localises to the cell membrane. It functions in the pathway glycan biosynthesis; sucrose metabolism. In terms of biological role, responsible for the transport of sucrose into the cell, with the concomitant uptake of protons (symport system). Can also transport other glucosides such as maltose, arbutin, salicin, helicin, alpha-phenylglucoside and beta-phenylglucoside. The polypeptide is Sucrose transport protein SUT5 (SUT5) (Oryza sativa subsp. japonica (Rice)).